We begin with the raw amino-acid sequence, 161 residues long: Phosphopantetheine adenylyltransferase (161 aa).

Threonine 10 is a substrate binding site. ATP-binding positions include threonine 10 to phenylalanine 11 and histidine 18. Residues lysine 42, methionine 74, and arginine 88 each coordinate substrate. Residues glycine 89–arginine 91, glutamate 99, and tryptophan 124–serine 130 contribute to the ATP site.

This sequence belongs to the bacterial CoaD family. In terms of assembly, homohexamer. The cofactor is Mg(2+).

It is found in the cytoplasm. It catalyses the reaction (R)-4'-phosphopantetheine + ATP + H(+) = 3'-dephospho-CoA + diphosphate. It participates in cofactor biosynthesis; coenzyme A biosynthesis; CoA from (R)-pantothenate: step 4/5. Its function is as follows. Reversibly transfers an adenylyl group from ATP to 4'-phosphopantetheine, yielding dephospho-CoA (dPCoA) and pyrophosphate. The sequence is that of Phosphopantetheine adenylyltransferase from Edwardsiella ictaluri (strain 93-146).